A 118-amino-acid chain; its full sequence is MKSIRISSDYRAKRDNASCFDETFLKSFAEELYNAIIEIIKENKTIIKNEVRDELRNELATKEDILLVEERLGKKIELLNQKIEREIKLVRRDMIIINLVIILAMYAPEIIGKLLIFR.

The chain crosses the membrane as a helical span at residues 95–115 (IIINLVIILAMYAPEIIGKLL).

Belongs to the M.jannaschii MJ0023/MJ0349/MJ1072/MJ1074/MJ1107/MJECL16 family.

The protein resides in the membrane. This is an uncharacterized protein from Methanocaldococcus jannaschii (strain ATCC 43067 / DSM 2661 / JAL-1 / JCM 10045 / NBRC 100440) (Methanococcus jannaschii).